A 796-amino-acid chain; its full sequence is Peroxisome proliferator-activated receptor gamma coactivator 1-alpha (796 aa).

At Lys77 the chain carries N6-acetyllysine. Residues 98-138 (PVDEDGLPSFDALTDGDVTTENEASPSSMPDGTPPPQEAEE) are disordered. Residues 114-127 (DVTTENEASPSSMP) are compositionally biased toward polar residues. An LXXLL motif motif is present at residues 142-146 (LKKLL). Lys144 carries the post-translational modification N6-acetyllysine. Thr176 is modified (phosphothreonine; by AMPK). At Lys182 the chain carries N6-acetyllysine. The segment at 211-275 (YLTTNDDPPH…NDPKGSPFEN (65 aa)) is disordered. The segment covering 217 to 235 (DPPHTKPTENRNSSRDKCT) has biased composition (basic and acidic residues). Over residues 242-258 (TQSQTQHLQAKPTTLSL) the composition is skewed to polar residues. An N6-acetyllysine mark is found at Lys252, Lys269, Lys276, and Lys319. 2 disordered regions span residues 288–374 (GTAG…AKRP) and 398–452 (TSQE…RKQL). The tract at residues 291-337 (GLTPPTTPPHKANQDNPFRASPKLKPSCKTVVPPPSKKARYSESSCT) is interaction with PPARG. The span at 332-344 (SESSCTQGSNSTK) shows a compositional bias: polar residues. N6-acetyllysine occurs at positions 345 and 411. The mediates interaction with RNF34 stretch occupies residues 348–796 (EQSELYAQLS…LKEAQRSLRR (449 aa)). Basic and acidic residues predominate over residues 401–412 (ELHDSRQLENKD). Polar residues-rich tracts occupy residues 413–428 (APSS…STDS) and 439–450 (VSRQVSPGSTRK). At Lys450 the chain carries N6-acetyllysine. Ser538 is modified (phosphoserine; by AMPK). Disordered stretches follow at residues 542-597 (FNSP…SSSR), 609-637 (HRTH…SYEE), and 648-667 (YRRE…ERQR). Residues 562 to 577 (QRMRSRSRSFSRHRSC) show a composition bias toward basic residues. Positions 578-597 (SRSPYSRSRSRSPGSRSSSR) are enriched in low complexity. The region spanning 675 to 751 (RVIYVGKIRP…TDFELYFCGR (77 aa)) is the RRM domain. An N6-acetyllysine mark is found at Lys756 and Lys777.

As to quaternary structure, homooligomer. Interacts with MYBBP1A; inhibits MYBBP1A transcriptional activation. Interacts with PRDM16, LPIN1 and PML. Interacts (via LXXLL motif) with RORA and RORC (via AF-2 motif); activates RORA and RORC transcriptional activation. Interacts with LRPPRC. Interacts with FOXO1. Interacts with NR5A2. In terms of processing, phosphorylation by AMPK in skeletal muscle increases activation of its own promoter. Phosphorylated by CLK2. Post-translationally, heavily acetylated by KAT2A/GCN5 under conditions of high nutrients, leading to inactivation of PPARGC1A. Deacetylated by SIRT1 in low nutrients/high NAD conditions, leading to its activation. Ubiquitinated. Ubiquitination by RNF34 induces proteasomal degradation.

It localises to the nucleus. Its subcellular location is the PML body. Transcriptional coactivator for steroid receptors and nuclear receptors. Greatly increases the transcriptional activity of PPARG and thyroid hormone receptor on the uncoupling protein promoter. Can regulate key mitochondrial genes that contribute to the program of adaptive thermogenesis. Plays an essential role in metabolic reprogramming in response to dietary availability through coordination of the expression of a wide array of genes involved in glucose and fatty acid metabolism. Acts as a key regulator of gluconeogenesis: stimulates hepatic gluconeogenesis by increasing the expression of gluconeogenic enzymes, and acting together with FOXO1 to promote the fasting gluconeogenic program. Induces the expression of PERM1 in the skeletal muscle in an ESRRA-dependent manner. Also involved in the integration of the circadian rhythms and energy metabolism. Required for oscillatory expression of clock genes, such as BMAL1 and NR1D1, through the coactivation of RORA and RORC, and metabolic genes, such as PDK4 and PEPCK. The protein is Peroxisome proliferator-activated receptor gamma coactivator 1-alpha (PPARGC1A) of Bos taurus (Bovine).